The sequence spans 114 residues: Large ribosomal subunit protein bL19 (114 aa).

It belongs to the bacterial ribosomal protein bL19 family.

Its function is as follows. This protein is located at the 30S-50S ribosomal subunit interface and may play a role in the structure and function of the aminoacyl-tRNA binding site. The sequence is that of Large ribosomal subunit protein bL19 from Thermobifida fusca (strain YX).